Here is a 285-residue protein sequence, read N- to C-terminus: Probable endonuclease 4 (285 aa).

Residues histidine 69, histidine 109, glutamate 145, aspartate 179, histidine 182, histidine 216, aspartate 229, histidine 231, and glutamate 261 each coordinate Zn(2+).

The protein belongs to the AP endonuclease 2 family. Zn(2+) is required as a cofactor.

The enzyme catalyses Endonucleolytic cleavage to 5'-phosphooligonucleotide end-products.. In terms of biological role, endonuclease IV plays a role in DNA repair. It cleaves phosphodiester bonds at apurinic or apyrimidinic (AP) sites, generating a 3'-hydroxyl group and a 5'-terminal sugar phosphate. This chain is Probable endonuclease 4, found in Shigella boydii serotype 4 (strain Sb227).